Consider the following 506-residue polypeptide: MPESRLQRLANLKIGTPQQLRRTSIIGTIGPKTNSCEAITALRKAGLNIIRLNFSHGSYEFHQSVIENAVKSEQQFPGRPLAIALDTKGPEIRTGRTLNDQDLYIPVDHQMIFTTDASFANTSNDKIMYIDYANLTKVIVPGRFIYVDDGILSFKVLQIIDESNLRVQAVNSGYIASHKGVNLPNTDVDLPPLSAKDMKDLQFGVRNGIHIVFASFIRTSEDVLSIRKALGSEGQDIKIISKIENQQGLDNFDEILEVTDGVMIARGDLGIEILAPEVLAIQKKLIAKCNLAGKPVICATQMLDSMTHNPRPTRAEVSDVGNAVLDGADCVMLSGETAKGDYPVNAVNIMAATALIAESTIAHLALYDDLRDATPKPTSTTETVAAAATAAILEQDGKAIVVLSTTGNTARLLSKYRPSCPIILVTRHARTARIAHLYRGVFPFLYEPKRLDDWGEDVHRRLKFGVEMARSFGMVDNGDTVVSIQGFKGGVGHSNTLRISTVGQEF.

A Phosphoserine modification is found at S24. R51 serves as a coordination point for substrate. N53, S55, D86, and T87 together coordinate K(+). ATP is bound at residue 53 to 56 (NFSH). ATP-binding residues include R93 and K179. E244 contributes to the Mg(2+) binding site. G267, D268, and T300 together coordinate substrate. D268 provides a ligand contact to Mg(2+).

This sequence belongs to the pyruvate kinase family. Homotetramer. The cofactor is Mg(2+). It depends on K(+) as a cofactor.

It carries out the reaction pyruvate + ATP = phosphoenolpyruvate + ADP + H(+). It functions in the pathway carbohydrate degradation; glycolysis; pyruvate from D-glyceraldehyde 3-phosphate: step 5/5. Not activated by fructose-1,6-bisphosphate. In terms of biological role, may be used by cells under conditions in which the level of glycolytic flux is very low. The sequence is that of Pyruvate kinase 2 (PYK2) from Saccharomyces cerevisiae (strain ATCC 204508 / S288c) (Baker's yeast).